A 507-amino-acid chain; its full sequence is Probable cytochrome P450 6a18 (507 aa).

C451 is a binding site for heme.

It belongs to the cytochrome P450 family. Heme is required as a cofactor.

It is found in the endoplasmic reticulum membrane. Its subcellular location is the microsome membrane. In terms of biological role, may be involved in the metabolism of insect hormones and in the breakdown of synthetic insecticides. This is Probable cytochrome P450 6a18 (Cyp6a18) from Drosophila melanogaster (Fruit fly).